The following is a 273-amino-acid chain: Eukaryotic translation initiation factor 3 subunit G-2 (273 aa).

Residues 193–271 enclose the RRM domain; sequence SAVRISNLSE…LILCVEWSKP (79 aa).

Belongs to the eIF-3 subunit G family. In terms of assembly, component of the eukaryotic translation initiation factor 3 (eIF-3) complex. The eIF-3 complex interacts with pix.

It is found in the cytoplasm. Functionally, RNA-binding component of the eukaryotic translation initiation factor 3 (eIF-3) complex, which is involved in protein synthesis of a specialized repertoire of mRNAs and, together with other initiation factors, stimulates binding of mRNA and methionyl-tRNAi to the 40S ribosome. The eIF-3 complex specifically targets and initiates translation of a subset of mRNAs involved in cell proliferation. This subunit can bind 18S rRNA. This is Eukaryotic translation initiation factor 3 subunit G-2 from Drosophila simulans (Fruit fly).